Reading from the N-terminus, the 183-residue chain is TATA-box-binding protein (183 aa).

Repeat copies occupy residues 7 to 83 (IENV…ARTL) and 99 to 177 (VQNI…RQQL).

This sequence belongs to the TBP family.

Functionally, general factor that plays a role in the activation of archaeal genes transcribed by RNA polymerase. Binds specifically to the TATA box promoter element which lies close to the position of transcription initiation. This Methanothrix thermoacetophila (strain DSM 6194 / JCM 14653 / NBRC 101360 / PT) (Methanosaeta thermophila) protein is TATA-box-binding protein.